Here is a 182-residue protein sequence, read N- to C-terminus: ATP-dependent protease subunit HslV (182 aa).

Thr-6 is an active-site residue. Residues Ala-164, Cys-167, and Thr-170 each contribute to the Na(+) site.

Belongs to the peptidase T1B family. HslV subfamily. A double ring-shaped homohexamer of HslV is capped on each side by a ring-shaped HslU homohexamer. The assembly of the HslU/HslV complex is dependent on binding of ATP.

The protein localises to the cytoplasm. The catalysed reaction is ATP-dependent cleavage of peptide bonds with broad specificity.. Its activity is regulated as follows. Allosterically activated by HslU binding. Its function is as follows. Protease subunit of a proteasome-like degradation complex believed to be a general protein degrading machinery. The protein is ATP-dependent protease subunit HslV of Borreliella afzelii (strain PKo) (Borrelia afzelii).